A 421-amino-acid polypeptide reads, in one-letter code: UDP-N-acetylglucosamine 1-carboxyvinyltransferase (421 aa).

22-23 (KN) is a phosphoenolpyruvate binding site. A UDP-N-acetyl-alpha-D-glucosamine-binding site is contributed by Arg-91. The Proton donor role is filled by Cys-115. Residue Cys-115 is modified to 2-(S-cysteinyl)pyruvic acid O-phosphothioketal. Residues 120–124 (RPVDL), 160–163 (KVSV), Asp-305, and Ile-327 each bind UDP-N-acetyl-alpha-D-glucosamine.

Belongs to the EPSP synthase family. MurA subfamily.

It localises to the cytoplasm. It carries out the reaction phosphoenolpyruvate + UDP-N-acetyl-alpha-D-glucosamine = UDP-N-acetyl-3-O-(1-carboxyvinyl)-alpha-D-glucosamine + phosphate. The protein operates within cell wall biogenesis; peptidoglycan biosynthesis. In terms of biological role, cell wall formation. Adds enolpyruvyl to UDP-N-acetylglucosamine. The chain is UDP-N-acetylglucosamine 1-carboxyvinyltransferase from Photorhabdus laumondii subsp. laumondii (strain DSM 15139 / CIP 105565 / TT01) (Photorhabdus luminescens subsp. laumondii).